A 379-amino-acid chain; its full sequence is Flagellin A (379 aa).

Coiled coils occupy residues 103-128 (TNSA…RIAE) and 302-341 (YVDS…IKDT).

This sequence belongs to the bacterial flagellin family. In terms of assembly, heteromer of multiple flagellin subunits including FlaA, FlaB, FlaC, FlaD and possibly FlaE.

It is found in the secreted. It localises to the bacterial flagellum. In terms of biological role, flagellin is the subunit protein which polymerizes to form the filaments of bacterial flagella. FlaA is essential for flagellar synthesis and full motility. Important for virulence at two different levels: is needed for crossing the fish integument and may play a role once the bacterium has entered the host. This is Flagellin A (flaA) from Vibrio anguillarum (Listonella anguillarum).